A 145-amino-acid chain; its full sequence is Maximins 3/H3 type 2 (145 aa).

A signal peptide spans 1 to 18 (MNFKYIVAVSFLIASAYA). 2 propeptides span residues 19–43 (RSVQ…LREI) and 74–124 (RTAE…KEKR). Ile144 is subject to Isoleucine amide.

Belongs to the bombinin family. In terms of tissue distribution, expressed by the skin glands.

Its subcellular location is the secreted. Maximin-3 shows antibacterial activity against both Gram-positive and Gram-negative bacteria. It also shows antimicrobial activity against the fungus C.albicans, but not against A.flavus nor P.uticale. It has little hemolytic activity. It possess a significant cytotoxicity against tumor cell lines. It possess a significant anti-HIV activity. It shows high spermicidal activity. Its function is as follows. Maximin-H3 shows antibacterial activity against both Gram-positive and Gram-negative bacteria. It also shows antimicrobial activity against the fungus C.albicans. Shows strong hemolytic activity. This chain is Maximins 3/H3 type 2, found in Bombina maxima (Giant fire-bellied toad).